The primary structure comprises 241 residues: tRNA pseudouridine synthase A (241 aa).

Asp51 (nucleophile) is an active-site residue. Position 110 (Tyr110) interacts with substrate.

Belongs to the tRNA pseudouridine synthase TruA family. As to quaternary structure, homodimer.

The enzyme catalyses uridine(38/39/40) in tRNA = pseudouridine(38/39/40) in tRNA. Formation of pseudouridine at positions 38, 39 and 40 in the anticodon stem and loop of transfer RNAs. The chain is tRNA pseudouridine synthase A from Campylobacter jejuni subsp. jejuni serotype O:2 (strain ATCC 700819 / NCTC 11168).